A 356-amino-acid polypeptide reads, in one-letter code: Dihydroorotate dehydrogenase (quinone) (356 aa).

FMN is bound by residues 66–70 (AGFDK) and Thr90. Substrate is bound at residue Lys70. 115-119 (NRMGF) is a substrate binding site. 2 residues coordinate FMN: Asn143 and Asn176. Residue Asn176 participates in substrate binding. Residue Ser179 is the Nucleophile of the active site. Asn181 serves as a coordination point for substrate. Residues Lys212 and Thr240 each contribute to the FMN site. 241 to 242 (NT) contacts substrate. FMN contacts are provided by residues Gly264, Gly293, and 314–315 (YT).

Belongs to the dihydroorotate dehydrogenase family. Type 2 subfamily. As to quaternary structure, monomer. It depends on FMN as a cofactor.

The protein resides in the cell membrane. The catalysed reaction is (S)-dihydroorotate + a quinone = orotate + a quinol. The protein operates within pyrimidine metabolism; UMP biosynthesis via de novo pathway; orotate from (S)-dihydroorotate (quinone route): step 1/1. Catalyzes the conversion of dihydroorotate to orotate with quinone as electron acceptor. The chain is Dihydroorotate dehydrogenase (quinone) (pyrD) from Mycobacterium leprae (strain TN).